The chain runs to 541 residues: Kinesin light chain 1 (541 aa).

A coiled-coil region spans residues 27 to 156 (KTKQVIQGLE…HLEFMNQLKK (130 aa)). Positions 156–176 (KYDDDISPSEDKDSDSSKEPL) are enriched in basic and acidic residues. A disordered region spans residues 156–201 (KYDDDISPSEDKDSDSSKEPLDDLFPNDEDEPGQGIQHSDSSAAAA). Serine 162 is modified (phosphoserine). 5 TPR repeats span residues 211-244 (LRTL…LEKT), 253-286 (ATML…REKT), 295-328 (AATL…REKV), 337-370 (AKQL…YQTK), and 380-413 (AKTK…AHEA). Tyrosine 448 is subject to Phosphotyrosine. Serine 459 bears the Phosphoserine mark. Residues 463-496 (TTTLKNLGALYRRQGKFEAAETLEEAAMRSRKQG) form a TPR 6 repeat. The segment at 493-541 (RKQGLDNVHKQRVAEVLNDPESMEKRRSRESLNMDVVKYESGPDGGEEA) is disordered. Composition is skewed to basic and acidic residues over residues 495-505 (QGLDNVHKQRV) and 514-524 (SMEKRRSRESL). Phosphoserine; by AMPK occurs at positions 520 and 523.

Belongs to the kinesin light chain family. As to quaternary structure, oligomeric complex composed of two heavy chains and two light chains. Interacts with SPAG9. Interacts with ATCAY; may link mitochondria to KLC1 and regulate mitochondria localization into neuron projections. Interacts (via TPR repeats) with TOR1A; the interaction associates TOR1A with the kinesin oligomeric complex. Interacts with BORCS5. Interacts with MAPK8IP3/JIP3 and NTRK2/TRKB; interaction with NTRK2/TRKB is mediated by MAPK8IP3/JIP3. Interacts with CLSTN1; phosphorylation at Ser-459 inhibits interaction with CLSTN1. In terms of processing, phosphorylation at Ser-459 by ERK inhibits interaction with CLSTN1 and localization to cytoplasmic vesicles.

The protein resides in the cell projection. It localises to the growth cone. It is found in the cytoplasmic vesicle. Its subcellular location is the cytoplasm. The protein localises to the cytoskeleton. Functionally, kinesin is a microtubule-associated force-producing protein that may play a role in organelle transport. The light chain may function in coupling of cargo to the heavy chain or in the modulation of its ATPase activity. The sequence is that of Kinesin light chain 1 (Klc1) from Mus musculus (Mouse).